Consider the following 232-residue polypeptide: Large ribosomal subunit protein uL1 (232 aa).

It belongs to the universal ribosomal protein uL1 family. In terms of assembly, part of the 50S ribosomal subunit.

In terms of biological role, binds directly to 23S rRNA. The L1 stalk is quite mobile in the ribosome, and is involved in E site tRNA release. Its function is as follows. Protein L1 is also a translational repressor protein, it controls the translation of the L11 operon by binding to its mRNA. The chain is Large ribosomal subunit protein uL1 from Bacillus licheniformis (strain ATCC 14580 / DSM 13 / JCM 2505 / CCUG 7422 / NBRC 12200 / NCIMB 9375 / NCTC 10341 / NRRL NRS-1264 / Gibson 46).